A 264-amino-acid chain; its full sequence is Molybdenum transport system permease protein ModB (264 aa).

6 helical membrane passes run 11 to 31 (VYLP…AIAI), 57 to 77 (TAAA…LVLA), 90 to 110 (LILL…LYAF), 127 to 147 (IAFS…PYLV), 176 to 196 (WWRV…VLAF), and 234 to 254 (AAVA…LGVG). The region spanning 51–253 (LLLSVKTAAA…VVAALVVLGV (203 aa)) is the ABC transmembrane type-1 domain.

This sequence belongs to the binding-protein-dependent transport system permease family. CysTW subfamily.

Its subcellular location is the cell membrane. In terms of biological role, part of the binding-protein-dependent transport system ModABCD for molybdenum; probably responsible for the translocation of the substrate across the membrane. The protein is Molybdenum transport system permease protein ModB (modB) of Mycobacterium bovis (strain ATCC BAA-935 / AF2122/97).